A 339-amino-acid chain; its full sequence is N-acetylornithine carbamoyltransferase (339 aa).

Residues 49-52, W77, and R112 each bind carbamoyl phosphate; that span reads SMRT. E144 lines the N(2)-acetyl-L-ornithine pocket. A carbamoyl phosphate-binding site is contributed by 148 to 151; it reads HPCQ. K252 and L295 together coordinate N(2)-acetyl-L-ornithine. 294 to 295 is a binding site for carbamoyl phosphate; the sequence is CL. At K302 the chain carries N6-carboxylysine. Residue R322 participates in carbamoyl phosphate binding.

It belongs to the aspartate/ornithine carbamoyltransferase superfamily. AOTCase family. As to quaternary structure, homotrimer.

The protein localises to the cytoplasm. The enzyme catalyses N(2)-acetyl-L-ornithine + carbamoyl phosphate = N(2)-acetyl-L-citrulline + phosphate + H(+). It functions in the pathway amino-acid biosynthesis; L-arginine biosynthesis. Its activity is regulated as follows. Carboxylation at Lys-302 increases the catalytic activity of the enzyme. Is potently inhibited by N(alpha)-acetyl-N(delta)-phosphonoacetyl-L-ornithine (PALAO). Its function is as follows. Catalyzes the transfer of the carbamoyl group from carbamoyl phosphate to the delta-amino group of N(2)-acetyl-L-ornithine to produce N(2)-acetyl-L-citrulline. This is a step in an alternative arginine biosynthesis pathway. The enzyme has no activity with ornithine. This is N-acetylornithine carbamoyltransferase from Xanthomonas campestris pv. campestris (strain ATCC 33913 / DSM 3586 / NCPPB 528 / LMG 568 / P 25).